The sequence spans 206 residues: Guanylate kinase (206 aa).

Residues 5 to 183 (GNLFVVAAPS…AVFDLKTIVH (179 aa)) form the Guanylate kinase-like domain. An ATP-binding site is contributed by 12-19 (APSGAGKS).

It belongs to the guanylate kinase family.

It localises to the cytoplasm. It catalyses the reaction GMP + ATP = GDP + ADP. In terms of biological role, essential for recycling GMP and indirectly, cGMP. The polypeptide is Guanylate kinase (Polaromonas sp. (strain JS666 / ATCC BAA-500)).